The following is a 265-amino-acid chain: Hydroxyethylthiazole kinase (265 aa).

Residue Met44 participates in substrate binding. Residues Lys120 and Ser166 each contribute to the ATP site. A substrate-binding site is contributed by Gly193.

This sequence belongs to the Thz kinase family. Requires Mg(2+) as cofactor.

It carries out the reaction 5-(2-hydroxyethyl)-4-methylthiazole + ATP = 4-methyl-5-(2-phosphooxyethyl)-thiazole + ADP + H(+). It functions in the pathway cofactor biosynthesis; thiamine diphosphate biosynthesis; 4-methyl-5-(2-phosphoethyl)-thiazole from 5-(2-hydroxyethyl)-4-methylthiazole: step 1/1. Its function is as follows. Catalyzes the phosphorylation of the hydroxyl group of 4-methyl-5-beta-hydroxyethylthiazole (THZ). This Methanosphaerula palustris (strain ATCC BAA-1556 / DSM 19958 / E1-9c) protein is Hydroxyethylthiazole kinase.